We begin with the raw amino-acid sequence, 222 residues long: Flagellar L-ring protein (222 aa).

The N-terminal stretch at 1–18 is a signal peptide; that stretch reads MKTTRAIAMLGLLLGLAA. C19 is lipidated: N-palmitoyl cysteine. C19 carries S-diacylglycerol cysteine lipidation.

It belongs to the FlgH family. As to quaternary structure, the basal body constitutes a major portion of the flagellar organelle and consists of four rings (L,P,S, and M) mounted on a central rod.

The protein resides in the cell outer membrane. It localises to the bacterial flagellum basal body. Functionally, assembles around the rod to form the L-ring and probably protects the motor/basal body from shearing forces during rotation. This is Flagellar L-ring protein from Thiobacillus denitrificans (strain ATCC 25259 / T1).